Consider the following 122-residue polypeptide: UPF0102 protein CPE1705 (122 aa).

It belongs to the UPF0102 family.

This is UPF0102 protein CPE1705 from Clostridium perfringens (strain 13 / Type A).